The chain runs to 235 residues: Flagellar L-ring protein (235 aa).

Positions 1–18 (MNKIAGTLFLLAGLAMAG) are cleaved as a signal peptide. Residue cysteine 19 is the site of N-palmitoyl cysteine attachment. The S-diacylglycerol cysteine moiety is linked to residue cysteine 19.

Belongs to the FlgH family. In terms of assembly, the basal body constitutes a major portion of the flagellar organelle and consists of four rings (L,P,S, and M) mounted on a central rod.

Its subcellular location is the cell outer membrane. It localises to the bacterial flagellum basal body. Its function is as follows. Assembles around the rod to form the L-ring and probably protects the motor/basal body from shearing forces during rotation. The chain is Flagellar L-ring protein from Chelativorans sp. (strain BNC1).